The chain runs to 134 residues: Ribosome-binding factor A (134 aa).

The protein belongs to the RbfA family. As to quaternary structure, monomer. Binds 30S ribosomal subunits, but not 50S ribosomal subunits or 70S ribosomes.

The protein localises to the cytoplasm. Its function is as follows. One of several proteins that assist in the late maturation steps of the functional core of the 30S ribosomal subunit. Associates with free 30S ribosomal subunits (but not with 30S subunits that are part of 70S ribosomes or polysomes). Required for efficient processing of 16S rRNA. May interact with the 5'-terminal helix region of 16S rRNA. The polypeptide is Ribosome-binding factor A (Rhizobium etli (strain CIAT 652)).